The following is a 337-amino-acid chain: Basic membrane protein A2 (337 aa).

Positions 1-17 (MNKLLLLILFECIIFLS) are cleaved as a signal peptide. The N-palmitoyl cysteine moiety is linked to residue Cys-18. Cys-18 carries the S-diacylglycerol cysteine lipid modification.

This sequence belongs to the BMP lipoprotein family. In terms of assembly, monomer.

The protein resides in the cell inner membrane. Immunogenic protein. May be part of an ABC-type nucleoside uptake system involved in the purine salvage pathway. The sequence is that of Basic membrane protein A2 (bmpA2) from Borrelia garinii subsp. bavariensis (strain ATCC BAA-2496 / DSM 23469 / PBi) (Borreliella bavariensis).